The chain runs to 465 residues: Asparagine--tRNA ligase (465 aa).

It belongs to the class-II aminoacyl-tRNA synthetase family. As to quaternary structure, homodimer.

The protein resides in the cytoplasm. The catalysed reaction is tRNA(Asn) + L-asparagine + ATP = L-asparaginyl-tRNA(Asn) + AMP + diphosphate + H(+). The chain is Asparagine--tRNA ligase from Pseudoalteromonas translucida (strain TAC 125).